Consider the following 132-residue polypeptide: Putative esterase Ta0293 (132 aa).

Belongs to the thioesterase PaaI family.

The protein is Putative esterase Ta0293 of Thermoplasma acidophilum (strain ATCC 25905 / DSM 1728 / JCM 9062 / NBRC 15155 / AMRC-C165).